We begin with the raw amino-acid sequence, 363 residues long: Flagellar P-ring protein 2 (363 aa).

Positions 1–18 (MLIRLLLLVICLAGPGVA) are cleaved as a signal peptide.

The protein belongs to the FlgI family. As to quaternary structure, the basal body constitutes a major portion of the flagellar organelle and consists of four rings (L,P,S, and M) mounted on a central rod.

The protein localises to the periplasm. It localises to the bacterial flagellum basal body. Assembles around the rod to form the L-ring and probably protects the motor/basal body from shearing forces during rotation. In Cereibacter sphaeroides (strain ATCC 17023 / DSM 158 / JCM 6121 / CCUG 31486 / LMG 2827 / NBRC 12203 / NCIMB 8253 / ATH 2.4.1.) (Rhodobacter sphaeroides), this protein is Flagellar P-ring protein 2.